We begin with the raw amino-acid sequence, 919 residues long: Periodic tryptophan protein 2 homolog (919 aa).

WD repeat units follow at residues 12–50 (GTVYRRGNLNFTCDGNSVISPVGNRVTVFDLKNNKSDTL), 53–93 (ATRY…LHHF), 94–132 (HFKGSVHSVSFSPDGRKFVVTKGNIAQMYHAPGKKREFN), 142–181 (GPYDETTCIDWTDDSRCFVVGSKDMSTWVFGAERWDNLIY), and 186–225 (GHKDAIVACFFESNSLDLYSLSQDGVLCMWQCDTPPEGLR). The segment at 238 to 267 (QREEEEEEEEDQEGDRETTIRGKATPAEEE) is disordered. Residues 240-251 (EEEEEEEEDQEG) are compositionally biased toward acidic residues. The segment covering 252-267 (DRETTIRGKATPAEEE) has biased composition (basic and acidic residues). 9 WD repeats span residues 286–325 (GDFNNLTAAAFHKKSHLLVTGFASGIFHLHELPEFNLIHS), 328–368 (ISDQ…YVLK), 371–410 (GHFNSMVALAYSPDGQYIVTGGDDGKVKVWNTLSGFCFVT), 413–452 (EHSSGVTGVTFTATGYVVVTSSMDGTVRAFDLHRYRNFRT), 456–498 (PRPT…DVLS), 499–538 (GHEGPISGLCFNPMKSVLASASWDKTVRLWDMFDSWRTKE), 541–580 (ALTSDALAVTFRPDGAELAVATLNSQITFWDPENAVQTGS), 603–642 (AKGKAFTALCYSADGHSILAGGMSKFVCIYHVREQILMKR), and 700–740 (KPEI…DPFE). The disordered stretch occupies residues 882-919 (TKRSLDPLGSEEEAEASEDDSLHLLGGGGRDSEEEMLA). Residues 890-900 (GSEEEAEASED) are compositionally biased toward acidic residues. A phosphoserine mark is found at Ser-898 and Ser-902.

This sequence belongs to the WD repeat PWP2 family. As to quaternary structure, part of the small subunit (SSU) processome, composed of more than 70 proteins and the RNA chaperone small nucleolar RNA (snoRNA) U3.

Its subcellular location is the nucleus. It is found in the nucleolus. Functionally, part of the small subunit (SSU) processome, first precursor of the small eukaryotic ribosomal subunit. During the assembly of the SSU processome in the nucleolus, many ribosome biogenesis factors, an RNA chaperone and ribosomal proteins associate with the nascent pre-rRNA and work in concert to generate RNA folding, modifications, rearrangements and cleavage as well as targeted degradation of pre-ribosomal RNA by the RNA exosome. The chain is Periodic tryptophan protein 2 homolog from Homo sapiens (Human).